Here is a 154-residue protein sequence, read N- to C-terminus: Low molecular weight protein-tyrosine-phosphatase PtpA (154 aa).

The active-site Nucleophile is the Cys8. Arg14 is a catalytic residue. Catalysis depends on Asp120, which acts as the Proton donor.

Belongs to the low molecular weight phosphotyrosine protein phosphatase family.

It carries out the reaction O-phospho-L-tyrosyl-[protein] + H2O = L-tyrosyl-[protein] + phosphate. Its function is as follows. Dephosphorylates the phosphotyrosine-containing proteins. In Staphylococcus haemolyticus (strain JCSC1435), this protein is Low molecular weight protein-tyrosine-phosphatase PtpA (ptpA).